The sequence spans 384 residues: BTB and MATH domain-containing protein 34 (384 aa).

Residues 41–127 (LNGNTTLKRI…ELKFQKEQLK (87 aa)) adopt a coiled-coil conformation. One can recognise an MATH domain in the interval 167-277 (EFSHTFNSVA…VFNFGEYEEI (111 aa)). Residues 317–380 (SDAVMIVKDE…LYGEPALTGR (64 aa)) enclose the BTB domain.

The protein is BTB and MATH domain-containing protein 34 (bath-34) of Caenorhabditis elegans.